A 246-amino-acid chain; its full sequence is Flagellar brake protein YcgR (246 aa).

Residues 122 to 234 (QRREFFRIQT…PMETIIQRYV (113 aa)) enclose the PilZ domain.

It belongs to the YcgR family. Monomer. Interacts with the flagellar basal bodies.

The protein localises to the bacterial flagellum basal body. Functionally, acts as a flagellar brake, regulating swimming and swarming in a bis-(3'-5') cyclic diguanylic acid (c-di-GMP)-dependent manner. Binds 1 c-di-GMP dimer per subunit. Increasing levels of c-di-GMP lead to decreased motility. The sequence is that of Flagellar brake protein YcgR from Chromobacterium violaceum (strain ATCC 12472 / DSM 30191 / JCM 1249 / CCUG 213 / NBRC 12614 / NCIMB 9131 / NCTC 9757 / MK).